The sequence spans 544 residues: Chaperonin GroEL 1 (544 aa).

ATP-binding positions include 30 to 33 (TLGP), K51, 87 to 91 (DGTTT), G415, 479 to 481 (NAA), and D495.

It belongs to the chaperonin (HSP60) family. Forms a cylinder of 14 subunits composed of two heptameric rings stacked back-to-back. Interacts with the co-chaperonin GroES.

Its subcellular location is the cytoplasm. The enzyme catalyses ATP + H2O + a folded polypeptide = ADP + phosphate + an unfolded polypeptide.. In terms of biological role, together with its co-chaperonin GroES, plays an essential role in assisting protein folding. The GroEL-GroES system forms a nano-cage that allows encapsulation of the non-native substrate proteins and provides a physical environment optimized to promote and accelerate protein folding. The protein is Chaperonin GroEL 1 of Vibrio cholerae serotype O1 (strain ATCC 39315 / El Tor Inaba N16961).